Consider the following 36-residue polypeptide: uncharacterized protein (36 aa).

Residues 1-14 show a composition bias toward polar residues; it reads MNQLGSGPTKQGVA. Positions 1 to 36 are disordered; the sequence is MNQLGSGPTKQGVATNTGSTGTTKNNSNLSGKGWVL. A compositionally biased stretch (low complexity) spans 15-36; it reads TNTGSTGTTKNNSNLSGKGWVL.

This is an uncharacterized protein from Dictyostelium discoideum (Social amoeba).